Consider the following 263-residue polypeptide: Oxidoreductase UcpA (263 aa).

Residue 10–32 (LITGALQGIGEGIARTFARHGAN) coordinates NAD(+). Ser-141 provides a ligand contact to substrate. Tyr-155 (proton acceptor) is an active-site residue.

Belongs to the short-chain dehydrogenases/reductases (SDR) family.

The polypeptide is Oxidoreductase UcpA (ucpA) (Escherichia coli O157:H7).